Reading from the N-terminus, the 89-residue chain is Small ribosomal subunit protein uS15 (89 aa).

Over residues 1–20 (MSITAERKAELIKTHARGEA) the composition is skewed to basic and acidic residues. A disordered region spans residues 1–24 (MSITAERKAELIKTHARGEADTGS).

Belongs to the universal ribosomal protein uS15 family. As to quaternary structure, part of the 30S ribosomal subunit. Forms a bridge to the 50S subunit in the 70S ribosome, contacting the 23S rRNA.

Functionally, one of the primary rRNA binding proteins, it binds directly to 16S rRNA where it helps nucleate assembly of the platform of the 30S subunit by binding and bridging several RNA helices of the 16S rRNA. Its function is as follows. Forms an intersubunit bridge (bridge B4) with the 23S rRNA of the 50S subunit in the ribosome. This chain is Small ribosomal subunit protein uS15, found in Phenylobacterium zucineum (strain HLK1).